We begin with the raw amino-acid sequence, 221 residues long: DNA mismatch repair protein MutH (221 aa).

This sequence belongs to the MutH family.

Its subcellular location is the cytoplasm. Functionally, sequence-specific endonuclease that cleaves unmethylated GATC sequences. It is involved in DNA mismatch repair. This is DNA mismatch repair protein MutH from Vibrio cholerae serotype O1 (strain ATCC 39315 / El Tor Inaba N16961).